The chain runs to 380 residues: Flagellar P-ring protein (380 aa).

Positions 1 to 35 are cleaved as a signal peptide; the sequence is MRFFTQSPFPLRTLTRRLTAFVCVGLLLLPGFTLA.

Belongs to the FlgI family. As to quaternary structure, the basal body constitutes a major portion of the flagellar organelle and consists of four rings (L,P,S, and M) mounted on a central rod.

The protein localises to the periplasm. The protein resides in the bacterial flagellum basal body. Its function is as follows. Assembles around the rod to form the L-ring and probably protects the motor/basal body from shearing forces during rotation. The sequence is that of Flagellar P-ring protein from Gluconobacter oxydans (strain 621H) (Gluconobacter suboxydans).